A 456-amino-acid polypeptide reads, in one-letter code: MIRNDTIIAQVTCPGKSAVGILRVSGIHANQVAFAVLGKIPKPRFATYSKFFDESKKVLDEGISLWFPAPFSLTGEDVLELQGHGNPFIMDLLIKRILCLKNIKIRIAQPGEFCQRAFLNGKIDLIQAEAIDDLINSETESVVRASLNSLHGNFSFYIQKIIKKLIEFRTNIEASIDFSEENIDFDFNIFIMSNFEKLNDKFLKIKNIVSEGSLIREAKRIVIVGPPNAGKSSLLNVLSCRDRAIVTDLPGTTRDVLYENINIHGISCEIIDTAGLRETEDKIEKIGIQRSWEMIKNSDHVLYVMDKTISLEDQKKTSIQFMKQISSYNIQEVTFVLNKNDLVEDFCGITKIENLLFISISALTGQGIDILKKHLSNRQKDKSQEGLFIARRRHIHQIDLSYCELLKAQKNWLKYKNIELLAESLNIINKLLGEITGEFTSSDLLKRIFSTFCIGK.

3 residues coordinate (6S)-5-formyl-5,6,7,8-tetrahydrofolate: Arg-23, Glu-80, and Lys-122. Residues 218-380 enclose the TrmE-type G domain; it reads AKRIVIVGPP…LKKHLSNRQK (163 aa). Asn-228 lines the K(+) pocket. GTP is bound by residues 228 to 233, 247 to 253, and 272 to 275; these read NAGKSS, TDLPGTT, and DTAG. Ser-232 lines the Mg(2+) pocket. Residues Thr-247, Leu-249, and Thr-252 each coordinate K(+). Thr-253 contributes to the Mg(2+) binding site. A (6S)-5-formyl-5,6,7,8-tetrahydrofolate-binding site is contributed by Lys-456.

This sequence belongs to the TRAFAC class TrmE-Era-EngA-EngB-Septin-like GTPase superfamily. TrmE GTPase family. As to quaternary structure, homodimer. Heterotetramer of two MnmE and two MnmG subunits. Requires K(+) as cofactor.

Its subcellular location is the cytoplasm. Functionally, exhibits a very high intrinsic GTPase hydrolysis rate. Involved in the addition of a carboxymethylaminomethyl (cmnm) group at the wobble position (U34) of certain tRNAs, forming tRNA-cmnm(5)s(2)U34. This is tRNA modification GTPase MnmE from Buchnera aphidicola subsp. Schizaphis graminum (strain Sg).